Consider the following 43-residue polypeptide: Large ribosomal subunit protein uL5 (43 aa).

It belongs to the universal ribosomal protein uL5 family. As to quaternary structure, part of the 50S ribosomal subunit; part of the 5S rRNA/L5/L18/L25 subcomplex. Contacts the 5S rRNA and the P site tRNA. Forms a bridge to the 30S subunit in the 70S ribosome.

Its function is as follows. This is one of the proteins that bind and probably mediate the attachment of the 5S RNA into the large ribosomal subunit, where it forms part of the central protuberance. In the 70S ribosome it contacts protein S13 of the 30S subunit (bridge B1b), connecting the 2 subunits; this bridge is implicated in subunit movement. Contacts the P site tRNA; the 5S rRNA and some of its associated proteins might help stabilize positioning of ribosome-bound tRNAs. The chain is Large ribosomal subunit protein uL5 (rplE) from Proteus vulgaris.